We begin with the raw amino-acid sequence, 480 residues long: F-box/LRR-repeat protein 14 (480 aa).

An F-box domain is found at 11 to 58 (DRQMDELPDHLVWDILSKLHTTDDRNSLSLSCKRFFSLDNEQRYSLRI). 15 LRR repeats span residues 61–86 (GLVP…EIIY), 94–119 (GKQV…TLSF), 120–144 (CTFI…KLNF), 145–170 (APRI…HLIR), 171–196 (CLNV…CIKN), 197–222 (CRAI…QFEV), 229–257 (MKVY…SLGN), 258–283 (CIIA…HLDM), 284–309 (CTGV…SLRV), 322–347 (TLRL…KISF), 355–379 (LFSF…SLDH), 380–404 (VCVF…ELVH), 405–429 (CQEV…KLSK), 430–454 (CLGV…VVED), and 455–480 (CPQV…SWMY).

The sequence is that of F-box/LRR-repeat protein 14 (FBL14) from Arabidopsis thaliana (Mouse-ear cress).